Consider the following 648-residue polypeptide: DNA gyrase subunit B (648 aa).

Positions 427–541 (TELFIVEGDS…AGYVYIAQPP (115 aa)) constitute a Toprim domain. Residues Glu433, Asp506, and Asp508 each contribute to the Mg(2+) site.

It belongs to the type II topoisomerase GyrB family. As to quaternary structure, heterotetramer, composed of two GyrA and two GyrB chains. In the heterotetramer, GyrA contains the active site tyrosine that forms a transient covalent intermediate with DNA, while GyrB binds cofactors and catalyzes ATP hydrolysis. It depends on Mg(2+) as a cofactor. The cofactor is Mn(2+). Ca(2+) serves as cofactor.

It localises to the cytoplasm. It catalyses the reaction ATP-dependent breakage, passage and rejoining of double-stranded DNA.. A type II topoisomerase that negatively supercoils closed circular double-stranded (ds) DNA in an ATP-dependent manner to modulate DNA topology and maintain chromosomes in an underwound state. Negative supercoiling favors strand separation, and DNA replication, transcription, recombination and repair, all of which involve strand separation. Also able to catalyze the interconversion of other topological isomers of dsDNA rings, including catenanes and knotted rings. Type II topoisomerases break and join 2 DNA strands simultaneously in an ATP-dependent manner. The sequence is that of DNA gyrase subunit B from Streptococcus pneumoniae serotype 4 (strain ATCC BAA-334 / TIGR4).